Reading from the N-terminus, the 398-residue chain is MEDDDSYVPSDLTAEERQELENIRRRKQELLADIQRLKEEIAEVANEIESLGSTEERKNMQRNKQVAMGRKKFNMDPKKGIQFLIENGLLKNTCEDIAQFLYKGEGLNKTAIGDYLGERDEFSIQVLHAFVELHEFTDLNLVQALRQFLWSFRLPGEAQKIDRMMEAFAQRYCQCNTGVFQSTDTCYVLSFAIIMLNTSLHNPNVKDKPTVERFIAMNRGINDGGDLPEELLRNLYESIKNEPFKIPEDDGNDLTHTFFNPDREGWLLKLGGGRVKTWKRRWFILTDNCLYYFEYTTDKEPRGIIPLENLSIREVEDSKKPNCFELYIPDNKDQVIKACKTEADGRVVEGNHTVYRISAPTPEEKEDWIKCIKAAISRDPFYEMLAARKKKVSSTKRH.

The residue at position 1 (methionine 1) is an N-acetylmethionine. Positions 1-60 are necessary for localization at adherens junction; it reads MEDDDSYVPSDLTAEERQELENIRRRKQELLADIQRLKEEIAEVANEIESLGSTEERKNM. The stretch at 10 to 67 forms a coiled coil; that stretch reads SDLTAEERQELENIRRRKQELLADIQRLKEEIAEVANEIESLGSTEERKNMQRNKQVA. Positions 73–202 constitute an SEC7 domain; it reads FNMDPKKGIQ…IIMLNTSLHN (130 aa). A PH domain is found at 260–377; the sequence is NPDREGWLLK…WIKCIKAAIS (118 aa). Residues 269-277, arginine 281, tyrosine 292, arginine 302, and asparagine 351 contribute to the a 1,2-diacyl-sn-glycero-3-phospho-(1D-myo-inositol-3,4,5-trisphosphate) site; that span reads KLGGGRVKT. The tract at residues 388-396 is C-terminal autoinhibitory region; sequence RKKKVSSTK.

Interacts with TRIM23 and CYTIP. Interacts (via coiled-coil domain) with FRMD4A (via coiled-coil domain). Interacts with FRMD4B. Found in a complex with PARD3, CYTH1 and FRMD4A. Interacts (via N-terminal domain) with INAVA (via N-terminal domain). Ubiquitinated by SCF(FBXW11) E3 ubiquitin-protein ligase complex. Ubiquitination induces proteasomal degradation. In terms of tissue distribution, expressed in colon and small intestine (at protein level).

The protein resides in the cell membrane. The protein localises to the cytoplasm. It localises to the cytosol. Its subcellular location is the cell junction. It is found in the tight junction. The protein resides in the adherens junction. Its function is as follows. Promotes guanine-nucleotide exchange on ARF1, ARF5 and ARF6. Promotes the activation of ARF factors through replacement of GDP with GTP. Plays an important role in membrane trafficking, during junctional remodeling and epithelial polarization, through regulation of ARF6 activity. In Mus musculus (Mouse), this protein is Cytohesin-1 (Cyth1).